We begin with the raw amino-acid sequence, 636 residues long: 1-deoxy-D-xylulose-5-phosphate synthase (636 aa).

Thiamine diphosphate contacts are provided by residues histidine 74 and 115 to 117 (AHS). Aspartate 146 lines the Mg(2+) pocket. Thiamine diphosphate is bound by residues 147–148 (GS), asparagine 176, tyrosine 287, and glutamate 369. Asparagine 176 is a binding site for Mg(2+).

Belongs to the transketolase family. DXPS subfamily. Homodimer. Mg(2+) serves as cofactor. Thiamine diphosphate is required as a cofactor.

It carries out the reaction D-glyceraldehyde 3-phosphate + pyruvate + H(+) = 1-deoxy-D-xylulose 5-phosphate + CO2. The protein operates within metabolic intermediate biosynthesis; 1-deoxy-D-xylulose 5-phosphate biosynthesis; 1-deoxy-D-xylulose 5-phosphate from D-glyceraldehyde 3-phosphate and pyruvate: step 1/1. In terms of biological role, catalyzes the acyloin condensation reaction between C atoms 2 and 3 of pyruvate and glyceraldehyde 3-phosphate to yield 1-deoxy-D-xylulose-5-phosphate (DXP). The chain is 1-deoxy-D-xylulose-5-phosphate synthase from Polaromonas naphthalenivorans (strain CJ2).